Here is a 181-residue protein sequence, read N- to C-terminus: Oligoribonuclease (181 aa).

Positions 8-171 (LIWIDLEMTG…QDIQESIAEL (164 aa)) constitute an Exonuclease domain. The active site involves tyrosine 129.

This sequence belongs to the oligoribonuclease family.

The protein resides in the cytoplasm. Functionally, 3'-to-5' exoribonuclease specific for small oligoribonucleotides. The protein is Oligoribonuclease of Shewanella sp. (strain ANA-3).